Here is a 382-residue protein sequence, read N- to C-terminus: Carbamoyl phosphate synthase small chain (382 aa).

Residues 1 to 189 (MIKSALLVLE…GLPEAKSEDD (189 aa)) are CPSase. The L-glutamine site is built by serine 47 and glycine 241. The region spanning 193–380 (HVVAYDFGAK…IELIKHYRSS (188 aa)) is the Glutamine amidotransferase type-1 domain. Cysteine 269 acts as the Nucleophile in catalysis. Residues leucine 270, glutamine 273, asparagine 311, glycine 313, and phenylalanine 314 each coordinate L-glutamine. Catalysis depends on residues histidine 353 and glutamate 355.

The protein belongs to the CarA family. Composed of two chains; the small (or glutamine) chain promotes the hydrolysis of glutamine to ammonia, which is used by the large (or ammonia) chain to synthesize carbamoyl phosphate. Tetramer of heterodimers (alpha,beta)4.

It catalyses the reaction hydrogencarbonate + L-glutamine + 2 ATP + H2O = carbamoyl phosphate + L-glutamate + 2 ADP + phosphate + 2 H(+). It carries out the reaction L-glutamine + H2O = L-glutamate + NH4(+). It functions in the pathway amino-acid biosynthesis; L-arginine biosynthesis; carbamoyl phosphate from bicarbonate: step 1/1. The protein operates within pyrimidine metabolism; UMP biosynthesis via de novo pathway; (S)-dihydroorotate from bicarbonate: step 1/3. Its function is as follows. Small subunit of the glutamine-dependent carbamoyl phosphate synthetase (CPSase). CPSase catalyzes the formation of carbamoyl phosphate from the ammonia moiety of glutamine, carbonate, and phosphate donated by ATP, constituting the first step of 2 biosynthetic pathways, one leading to arginine and/or urea and the other to pyrimidine nucleotides. The small subunit (glutamine amidotransferase) binds and cleaves glutamine to supply the large subunit with the substrate ammonia. The chain is Carbamoyl phosphate synthase small chain from Salmonella typhi.